The sequence spans 371 residues: Chorismate synthase (371 aa).

NADP(+) is bound by residues R48 and R54. Residues 131–133 (RSS), 245–246 (NA), G290, 305–309 (KPTSS), and R331 contribute to the FMN site.

It belongs to the chorismate synthase family. In terms of assembly, homotetramer. FMNH2 is required as a cofactor.

It carries out the reaction 5-O-(1-carboxyvinyl)-3-phosphoshikimate = chorismate + phosphate. It functions in the pathway metabolic intermediate biosynthesis; chorismate biosynthesis; chorismate from D-erythrose 4-phosphate and phosphoenolpyruvate: step 7/7. Its function is as follows. Catalyzes the anti-1,4-elimination of the C-3 phosphate and the C-6 proR hydrogen from 5-enolpyruvylshikimate-3-phosphate (EPSP) to yield chorismate, which is the branch point compound that serves as the starting substrate for the three terminal pathways of aromatic amino acid biosynthesis. This reaction introduces a second double bond into the aromatic ring system. The polypeptide is Chorismate synthase (Mesorhizobium japonicum (strain LMG 29417 / CECT 9101 / MAFF 303099) (Mesorhizobium loti (strain MAFF 303099))).